The following is a 126-amino-acid chain: Protein ApaG (126 aa).

In terms of domain architecture, ApaG spans 2–126; the sequence is DISTPCIKCQ…FRLAIPNILN (125 aa).

The chain is Protein ApaG from Vibrio atlanticus (strain LGP32) (Vibrio splendidus (strain Mel32)).